The following is a 164-amino-acid chain: MHAFFPRLLLLLLFLPLTHCTYLPSLPYKIDIQQGNVVTDEMVAKLKPGMTRSQVRFTLGTPLVMDIFHGDRWDYIYRTAPGGRVAEEKKLTVFFQDDRLSHIQGDFPQPPAFSESEPAQNFFSPEQTFTPAPDTDSNMNEEPDKKGTVNFLKENQTNFYKDNQ.

The signal sequence occupies residues 1–19; that stretch reads MHAFFPRLLLLLLFLPLTH. The tract at residues 111–164 is disordered; it reads PAFSESEPAQNFFSPEQTFTPAPDTDSNMNEEPDKKGTVNFLKENQTNFYKDNQ. Composition is skewed to polar residues over residues 117-140 and 153-164; these read EPAQ…SNMN and KENQTNFYKDNQ.

It belongs to the BamE family. Part of the Bam complex.

The protein resides in the cell outer membrane. Part of the outer membrane protein assembly complex, which is involved in assembly and insertion of beta-barrel proteins into the outer membrane. The protein is Outer membrane protein assembly factor BamE of Nitrosomonas europaea (strain ATCC 19718 / CIP 103999 / KCTC 2705 / NBRC 14298).